Here is a 56-residue protein sequence, read N- to C-terminus: PEKRNVVVVKDDPDHYKDYAHDKKIDXXXRFIITGNKVKTEKINRQILDNAAKYVE.

It belongs to the orthopoxvirus OPG108 family. Does not contain disulfide bonds.

The protein resides in the virion membrane. Its function is as follows. Envelope protein that binds to heparan sulfate on the cell surface and might provide virion attachment to target cell. This is Envelope protein H3 (OPG108) from Vaccinia virus (strain L-IVP) (VACV).